Reading from the N-terminus, the 212-residue chain is Nitrile hydratase subunit beta (212 aa).

Belongs to the nitrile hydratase subunit beta family. As to quaternary structure, heterodimer of an alpha and a beta chain.

The catalysed reaction is an aliphatic primary amide = an aliphatic nitrile + H2O. Functionally, NHase catalyzes the hydration of various nitrile compounds to the corresponding amides. The protein is Nitrile hydratase subunit beta (nthB) of Rhodococcus erythropolis (Arthrobacter picolinophilus).